A 269-amino-acid chain; its full sequence is ATP synthase subunit gamma, mitochondrial (269 aa).

As to quaternary structure, F-type ATP synthases have 2 components, the catalytic core F(1) and the membrane-embedded component F(0), linked together by a central stalk and a peripheral stalk. The central stalk, also called rotor shaft, is often seen as part of F(1). The peripheral stalk is seen as part of F(0). F(0) contains the membrane channel next to the rotor. F-type ATP synthases form dimers but each monomer functions independently in ATP generation. The dimer consists of 18 different polypeptides: ATP1 (subunit alpha, part of F(1), 3 molecules per monomer), ATP2 (subunit beta, part of F(1), 3 molecules per monomer), ATP3 (subunit gamma, part of the central stalk), ATP4 (subunit b, part of the peripheral stalk), ATP5/OSCP (subunit 5/OSCP, part of the peripheral stalk), ATP6 (subunit a, part of the peripheral stalk), ATP7 (subunit d, part of the peripheral stalk), ATP8 (subunit 8, part of the peripheral stalk), OLI1 (subunit c, part of the rotor, 10 molecules per monomer), ATP14 (subunit h, part of the peripheral stalk), ATP15 (subunit epsilon, part of the central stalk), ATP16 (subunit delta, part of the central stalk), ATP17 (subunit f, part of the peripheral stalk), ATP18 (subunit i/j, part of the peripheral stalk). Dimer-specific subunits are ATP19 (subunit k, at interface between monomers), ATP20 (subunit g, at interface between monomers), TIM11 (subunit e, at interface between monomers). Also contains subunit L.

Its subcellular location is the mitochondrion inner membrane. In terms of biological role, mitochondrial membrane ATP synthase (F(1)F(0) ATP synthase or Complex V) produces ATP from ADP in the presence of a proton gradient across the membrane which is generated by electron transport complexes of the respiratory chain. F-type ATP synthases consist of two structural domains, F(1) - containing the extramembraneous catalytic core, and F(0) - containing the membrane proton channel, linked together by a central stalk and a peripheral stalk. During catalysis, ATP synthesis in the catalytic domain of F(1) is coupled via a rotary mechanism of the central stalk subunits to proton translocation. Part of the complex F(1) domain and the central stalk which is part of the complex rotary element. The gamma/ATP3 subunit protrudes into the catalytic domain formed of alpha/ATP1(3)beta/ATP2(3). Rotation of the central stalk against the surrounding alpha/ATP1(3)beta/ATP2(3) subunits leads to hydrolysis of ATP in three separate catalytic sites on the beta/ATP2 subunits. The protein is ATP synthase subunit gamma, mitochondrial of Pichia angusta (Yeast).